Consider the following 443-residue polypeptide: Thymidine phosphorylase (443 aa).

It belongs to the thymidine/pyrimidine-nucleoside phosphorylase family. As to quaternary structure, homodimer.

The catalysed reaction is thymidine + phosphate = 2-deoxy-alpha-D-ribose 1-phosphate + thymine. Its pathway is pyrimidine metabolism; dTMP biosynthesis via salvage pathway; dTMP from thymine: step 1/2. Functionally, the enzymes which catalyze the reversible phosphorolysis of pyrimidine nucleosides are involved in the degradation of these compounds and in their utilization as carbon and energy sources, or in the rescue of pyrimidine bases for nucleotide synthesis. The chain is Thymidine phosphorylase from Shewanella denitrificans (strain OS217 / ATCC BAA-1090 / DSM 15013).